Consider the following 179-residue polypeptide: Iron sulfur cluster assembly protein 1, mitochondrial (179 aa).

The segment at arginine 160–threonine 179 is disordered.

The protein belongs to the NifU family. Component of the core Fe-S cluster (ISC) assembly machinery. The cofactor is [2Fe-2S] cluster.

It localises to the mitochondrion matrix. Its pathway is cofactor biosynthesis; iron-sulfur cluster biosynthesis. Scaffold protein for the de novo synthesis of iron-sulfur (Fe-S) clusters within mitochondria, which is required for maturation of both mitochondrial and cytoplasmic [2Fe-2S] and [4Fe-4S] proteins. First, a [2Fe-2S] cluster is transiently assembled on the scaffold protein ISU1. In a second step, the cluster is released from ISU1, transferred to a glutaredoxin, followed by the formation of mitochondrial [2Fe-2S] proteins, the synthesis of [4Fe-4S] clusters and their target-specific insertion into the recipient apoproteins. Cluster assembly on ISU1 depends on the function of the cysteine desulfurase complex NFS1-ISD11, which serves as the sulfur donor for cluster synthesis, the iron-binding protein frataxin as the putative iron donor, and the electron transfer chain comprised of ferredoxin reductase and ferredoxin, which receive their electrons from NADH. The chain is Iron sulfur cluster assembly protein 1, mitochondrial (ISU1) from Debaryomyces hansenii (strain ATCC 36239 / CBS 767 / BCRC 21394 / JCM 1990 / NBRC 0083 / IGC 2968) (Yeast).